The following is a 113-amino-acid chain: Nucleoid-associated protein SAV_4556 (113 aa).

Belongs to the YbaB/EbfC family. In terms of assembly, homodimer.

It is found in the cytoplasm. Its subcellular location is the nucleoid. Its function is as follows. Binds to DNA and alters its conformation. May be involved in regulation of gene expression, nucleoid organization and DNA protection. The polypeptide is Nucleoid-associated protein SAV_4556 (Streptomyces avermitilis (strain ATCC 31267 / DSM 46492 / JCM 5070 / NBRC 14893 / NCIMB 12804 / NRRL 8165 / MA-4680)).